A 71-amino-acid chain; its full sequence is uncharacterized protein (71 aa).

This is an uncharacterized protein from Saccharomyces cerevisiae (strain ATCC 204508 / S288c) (Baker's yeast).